We begin with the raw amino-acid sequence, 79 residues long: Raniseptin-9 (79 aa).

Residues 1–22 form the signal peptide; it reads MAFLKKSLFLVLFLGIVSLSIC. Positions 23–49 are excised as a propeptide; the sequence is EEEKREGEEEEKQEEENEELSEEELRE. Residues 27 to 46 form a disordered region; the sequence is REGEEEEKQEEENEELSEEE. Residues 30–44 show a composition bias toward acidic residues; it reads EEEEKQEEENEELSE.

The protein belongs to the frog skin active peptide (FSAP) family. Dermaseptin subfamily. As to expression, expressed by the skin glands.

The protein resides in the secreted. Its function is as follows. Has antibacterial activity. This Boana raniceps (Chaco tree frog) protein is Raniseptin-9.